A 105-amino-acid chain; its full sequence is NADH-quinone oxidoreductase subunit K (105 aa).

Helical transmembrane passes span 7-27 (IGVN…MFAV), 34-54 (IVIL…FLTF), and 66-86 (FSLF…AIVI).

The protein belongs to the complex I subunit 4L family. As to quaternary structure, NDH-1 is composed of 14 different subunits. Subunits NuoA, H, J, K, L, M, N constitute the membrane sector of the complex.

It is found in the cell inner membrane. The enzyme catalyses a quinone + NADH + 5 H(+)(in) = a quinol + NAD(+) + 4 H(+)(out). In terms of biological role, NDH-1 shuttles electrons from NADH, via FMN and iron-sulfur (Fe-S) centers, to quinones in the respiratory chain. The immediate electron acceptor for the enzyme in this species is believed to be a menaquinone. Couples the redox reaction to proton translocation (for every two electrons transferred, four hydrogen ions are translocated across the cytoplasmic membrane), and thus conserves the redox energy in a proton gradient. In Chlorobaculum parvum (strain DSM 263 / NCIMB 8327) (Chlorobium vibrioforme subsp. thiosulfatophilum), this protein is NADH-quinone oxidoreductase subunit K.